The sequence spans 80 residues: Acyl carrier protein (80 aa).

One can recognise a Carrier domain in the interval 1–79; it reads MTEEEIFNKI…EAVEYIKSHQ (79 aa). At Ser-39 the chain carries O-(pantetheine 4'-phosphoryl)serine.

The protein belongs to the acyl carrier protein (ACP) family. 4'-phosphopantetheine is transferred from CoA to a specific serine of apo-ACP by AcpS. This modification is essential for activity because fatty acids are bound in thioester linkage to the sulfhydryl of the prosthetic group.

The protein localises to the cytoplasm. It functions in the pathway lipid metabolism; fatty acid biosynthesis. Functionally, carrier of the growing fatty acid chain in fatty acid biosynthesis. This is Acyl carrier protein from Lactobacillus johnsonii (strain CNCM I-12250 / La1 / NCC 533).